We begin with the raw amino-acid sequence, 325 residues long: MIALSYKAFLNPYIIEVEKRLYECIQSDSETINKAAHHILSSGGKRVRPMFVLLSGFLNDTQKDDLIRTAVSLELVHMASLVHDDYIDNSDMRRGNTSVHIAFDKDTAIRTGHFLLARALQNIATINNSKFHQIFSKTILEVCFGEFDQMADRFNYPVSFTAYLRRINRKTAILIEASCHLGALSSQLDEQSTYHIKQFGHCIGMSYQIIDDILDYTSDEATLGKPVGSDIRNGHITYPLMAAIANLKEQDDDKLEAVVKHLTSTSDDEVYQYIVSQVKQYGIEPAELLSRKYGDKAKYHLSQLQDSNIKDYLEEIHEKMLKRVY.

3 residues coordinate isopentenyl diphosphate: K45, R48, and H77. D84, D88, and R93 together coordinate all-trans-hexaprenyl diphosphate. The Mg(2+) site is built by D84 and D88. R94 is a binding site for isopentenyl diphosphate. All-trans-hexaprenyl diphosphate is bound by residues K170, T171, and Q208.

The protein belongs to the FPP/GGPP synthase family. In terms of assembly, dimer of heterodimer or heterotetramer composed of a small (Hexs-a) and large (Hexs-B) subunit. Mg(2+) is required as a cofactor.

The catalysed reaction is 3 isopentenyl diphosphate + (2E,6E)-farnesyl diphosphate = all-trans-hexaprenyl diphosphate + 3 diphosphate. Catalyzes the condensation of three molecules of isopentenyl diphosphate with farnesyl diphosphate (FPP) to yield (all-E)-hexaprenyl diphosphate (HexPP; C30), the precursor of the prenyl side chain of menaquinone-6. Large subunit Hexs-B catalyzes the condensation reaction and the final product chain length is cooperatively regulated by both the Hexs-A and Hexs-B subunits using the whole size of the hydrophobic cleft as a ruler. This Micrococcus luteus (Micrococcus lysodeikticus) protein is Hexaprenyl-diphosphate synthase large subunit ((2E,6E)-farnesyl-diphosphate specific) (hexs-b).